A 257-amino-acid chain; its full sequence is Imidazole glycerol phosphate synthase subunit HisF (257 aa).

Active-site residues include D11 and D130.

The protein belongs to the HisA/HisF family. Heterodimer of HisH and HisF.

The protein resides in the cytoplasm. The catalysed reaction is 5-[(5-phospho-1-deoxy-D-ribulos-1-ylimino)methylamino]-1-(5-phospho-beta-D-ribosyl)imidazole-4-carboxamide + L-glutamine = D-erythro-1-(imidazol-4-yl)glycerol 3-phosphate + 5-amino-1-(5-phospho-beta-D-ribosyl)imidazole-4-carboxamide + L-glutamate + H(+). The protein operates within amino-acid biosynthesis; L-histidine biosynthesis; L-histidine from 5-phospho-alpha-D-ribose 1-diphosphate: step 5/9. Its function is as follows. IGPS catalyzes the conversion of PRFAR and glutamine to IGP, AICAR and glutamate. The HisF subunit catalyzes the cyclization activity that produces IGP and AICAR from PRFAR using the ammonia provided by the HisH subunit. This is Imidazole glycerol phosphate synthase subunit HisF from Shewanella baltica (strain OS155 / ATCC BAA-1091).